The following is a 234-amino-acid chain: Large ribosomal subunit protein uL1 (234 aa).

Belongs to the universal ribosomal protein uL1 family. As to quaternary structure, part of the 50S ribosomal subunit.

Functionally, binds directly to 23S rRNA. The L1 stalk is quite mobile in the ribosome, and is involved in E site tRNA release. Protein L1 is also a translational repressor protein, it controls the translation of the L11 operon by binding to its mRNA. This Anaeromyxobacter dehalogenans (strain 2CP-1 / ATCC BAA-258) protein is Large ribosomal subunit protein uL1.